Consider the following 587-residue polypeptide: Aspartate--tRNA ligase (587 aa).

Glu-173 is an L-aspartate binding site. The tract at residues 197–200 is aspartate; sequence QTLK. Arg-219 contributes to the L-aspartate binding site. ATP is bound by residues 219 to 221 and Gln-228; that span reads RDE. Residue His-446 participates in L-aspartate binding. Glu-480 serves as a coordination point for ATP. Arg-487 is a binding site for L-aspartate. 532–535 provides a ligand contact to ATP; sequence GLDR.

The protein belongs to the class-II aminoacyl-tRNA synthetase family. Type 1 subfamily. As to quaternary structure, homodimer.

The protein resides in the cytoplasm. The enzyme catalyses tRNA(Asp) + L-aspartate + ATP = L-aspartyl-tRNA(Asp) + AMP + diphosphate. Its function is as follows. Catalyzes the attachment of L-aspartate to tRNA(Asp) in a two-step reaction: L-aspartate is first activated by ATP to form Asp-AMP and then transferred to the acceptor end of tRNA(Asp). This chain is Aspartate--tRNA ligase, found in Bacteroides thetaiotaomicron (strain ATCC 29148 / DSM 2079 / JCM 5827 / CCUG 10774 / NCTC 10582 / VPI-5482 / E50).